A 1345-amino-acid chain; its full sequence is Vascular endothelial growth factor receptor 2 (1345 aa).

The signal sequence occupies residues 1–19; it reads MESKALLAVALWFCVETRA. Over 20–762 the chain is Extracellular; it reads ASVGLPGDFL…EGAQEKTNLE (743 aa). N-linked (GlcNAc...) asparagine glycosylation is found at N46, N98, N145, N160, and N247. Ig-like C2-type domains follow at residues 46–111, 143–209, 226–325, 330–416, 423–542, 549–656, and 665–751; these read NTTL…RDVD, NKNK…INDE, YDVI…TFVR, PFIA…HMVS, PQIG…RVIS, PEIT…LVKQ, and PMIT…TLFI. A disulfide bridge links C53 with C105. C152 and C202 are disulfide-bonded. A disulfide bridge connects residues C248 and C309. N-linked (GlcNAc...) asparagine glycosylation is found at N320, N376, N397, N509, N521, N578, N611, N617, N629, N673, N702, and N719. Intrachain disulfides connect C447/C528 and C569/C640. An intrachain disulfide couples C686 to C735. The helical transmembrane segment at 763–783 threads the bilayer; it reads VIILVGTAVIAMFFWLLLVIV. The Cytoplasmic segment spans residues 784–1345; that stretch reads LRTVKRANEG…SGTTLRSPPV (562 aa). Position 799 is a phosphotyrosine (Y799). In terms of domain architecture, Protein kinase spans 832–1160; the sequence is LKLGKPLGRG…FSELVEHLGN (329 aa). Residues 838–846 and K866 each bind ATP; that span reads LGRGAFGQV. At Y949 the chain carries Phosphotyrosine; by autocatalysis. S980 and S982 each carry phosphoserine. Residue Y994 is modified to Phosphotyrosine; by autocatalysis. A disulfide bridge connects residues C1022 and C1043. The active-site Proton acceptor is the D1026. Residues Y1052, Y1057, Y1173, and Y1212 each carry the phosphotyrosine; by autocatalysis modification. Phosphoserine is present on residues S1229 and S1233. T1236 is subject to Phosphothreonine. Positions 1272-1316 are disordered; the sequence is DRNKLSPSFGGMMPSKSRESVASEGSNQTSGYQSGYHSDDTDTTV. Positions 1294–1307 are enriched in polar residues; sequence SEGSNQTSGYQSGY. Phosphotyrosine; by autocatalysis is present on residues Y1303, Y1307, and Y1317.

The protein belongs to the protein kinase superfamily. Tyr protein kinase family. CSF-1/PDGF receptor subfamily. As to quaternary structure, homodimer in the presence of bound dimeric VEGFA, VEGFC or VEGFD ligands; monomeric in the absence of bound ligands. Can also form heterodimers with FLT1/VEGFR1 and KDR/VEGFR2. Interacts (tyrosine phosphorylated) with LFYN, NCK1, PLCG1. Interacts (tyrosine-phosphorylated active form preferentially) with DAB2IP (via C2 domain and active form preferentially); the interaction occurs at the late phase of VEGFA response and inhibits KDR/VEGFR2 activity. Interacts with SHBSH2D2A/TSAD, GRB2, MYOF, CBL and PDCD6. Interacts (via C-terminus domain) with ERN1 (via kinase domain); the interaction is facilitated in a XBP1 isoform 1- and vascular endothelial growth factor (VEGF)-dependent manner in endothelial cells. Interacts (via juxtamembrane region) with chaperone PDCL3 (via thioredoxin fold region); the interaction leads to increased KDR/VEGFR2 abundance through inhibition of its ubiquitination and degradation. Interacts (tyrosine phosphorylated) with CCDC88A/GIV (via SH2-like region); binding requires autophosphorylation of the KDR/VEGFR2 C-terminal region. Interacts with isoform 2 of BSG. Interacts with SLC31A1; this interaction is induced upon VEGFA stimulation leading to SLC31A1 and KDR subsequent co-internalization to early endosomes, thereby activating KDR downstream signaling in endothelial cells. N-glycosylated. In terms of processing, ubiquitinated. Tyrosine phosphorylation of the receptor promotes its poly-ubiquitination, leading to its degradation via the proteasome or lysosomal proteases. Post-translationally, autophosphorylated on tyrosine residues upon ligand binding. Autophosphorylation occurs in trans, i.e. one subunit of the dimeric receptor phosphorylates tyrosine residues on the other subunit. Phosphorylation at Tyr-949 is important for interaction with SH2D2A/TSAD and VEGFA-mediated reorganization of the actin cytoskeleton. Phosphorylation at Tyr-1173 is important for interaction with PLCG1 and SHB. Phosphorylation at Tyr-1212 is important for interaction with NCK1 and FYN. Dephosphorylated by PTPRJ at Tyr-799, Tyr-949, Tyr-994, Tyr-1052, Tyr-1057, Tyr-1173 and Tyr-1212. The inhibitory disulfide bond between Cys-1022 and Cys-1043 may serve as a specific molecular switch for H(2)S-induced modification that regulates KDR/VEGFR2 function. Expressed in endothelial cells (at protein level). Detected in embryonic endothelial cells, as well as hematopoietic stem and progenitor cells. Detected in vascular endothelium. Expressed at high levels in adult heart, lung, kidney, brain and skeletal muscle, but is also expressed at lower levels in most other adult tissues.

It localises to the cell junction. The protein localises to the endoplasmic reticulum. Its subcellular location is the cell membrane. It is found in the cytoplasm. The protein resides in the nucleus. It localises to the cytoplasmic vesicle. The protein localises to the early endosome. Its subcellular location is the secreted. It carries out the reaction L-tyrosyl-[protein] + ATP = O-phospho-L-tyrosyl-[protein] + ADP + H(+). Present in an inactive conformation in the absence of bound ligand. Binding of VEGFA, VEGFC or VEGFD leads to dimerization and activation by autophosphorylation on tyrosine residues. May be regulated by hydrogen sulfide (H(2)S) levels via a sensitive intracellular disulfide bond. Functionally, tyrosine-protein kinase that acts as a cell-surface receptor for VEGFA, VEGFC and VEGFD. Plays an essential role in the regulation of angiogenesis, vascular development, vascular permeability, and embryonic hematopoiesis. Promotes proliferation, survival, migration and differentiation of endothelial cells. Promotes reorganization of the actin cytoskeleton. Isoforms lacking a transmembrane domain, such as isoform 2, may function as decoy receptors for VEGFA, VEGFC and/or VEGFD. Isoform 2 plays an important role as a negative regulator of VEGFA- and VEGFC-mediated lymphangiogenesis by limiting the amount of free VEGFA and/or VEGFC and by preventing their binding to FLT4. Modulates FLT1 and FLT4 signaling by forming heterodimers. Binding of vascular growth factors to isoform 1 leads to the activation of several signaling cascades. Activation of PLCG1 leads to the production of the cellular signaling molecules diacylglycerol and inositol 1,4,5-trisphosphate and the activation of protein kinase C. Mediates activation of MAPK1/ERK2, MAPK3/ERK1 and the MAP kinase signaling pathway, as well as of the AKT1 signaling pathway. Mediates phosphorylation of PIK3R1, the regulatory subunit of phosphatidylinositol 3-kinase, reorganization of the actin cytoskeleton and activation of PTK2/FAK1. Required for VEGFA-mediated induction of NOS2 and NOS3, leading to the production of the signaling molecule nitric oxide (NO) by endothelial cells. Phosphorylates PLCG1. Promotes phosphorylation of FYN, NCK1, NOS3, PIK3R1, PTK2/FAK1 and SRC. This is Vascular endothelial growth factor receptor 2 from Mus musculus (Mouse).